Consider the following 383-residue polypeptide: Protein dyf-4 (383 aa).

Residues 1–16 form the signal peptide; that stretch reads MKTIWLLLATCIHVFA. Asparagine 64 carries an N-linked (GlcNAc...) asparagine glycan.

In terms of assembly, interacts with daf-6. Expressed in sheath and socket glial cells in both the amphid and phasmid ciliated sensory neurons (at protein level).

Its subcellular location is the secreted. In terms of biological role, required for the localization of daf-6 to the socket glial channel and the sheath lumen. In association with daf-6, plays a role in dendrite extension and ciliogenesis to ensure the formation of glial channels in amphid and phasmid ciliated sensory neurons. The chain is Protein dyf-4 from Caenorhabditis elegans.